Here is a 169-residue protein sequence, read N- to C-terminus: Probable prefoldin subunit 3 (169 aa).

It belongs to the prefoldin subunit alpha family. Heterohexamer of two PFD-alpha type and four PFD-beta type subunits.

Functionally, binds specifically to cytosolic chaperonin (c-CPN) and transfers target proteins to it. Binds to nascent polypeptide chain and promotes folding in an environment in which there are many competing pathways for nonnative proteins. The sequence is that of Probable prefoldin subunit 3 from Schizosaccharomyces pombe (strain 972 / ATCC 24843) (Fission yeast).